The sequence spans 473 residues: MATKTYNAGVKEYRSTYWEPHYTPKDTDILACFKITPQPGVDREEVAAAVAAESSTGTWTTVWTDLLTDLDYYKGRAYRIEDVPGDDTCFYAFVAYPIDLFEEGSVVNVLTSLVGNVFGFKALRALRSEDVRFPIAYVKTCGGPPHGIQVERDIMNKYGRPLLGCTIKPKLGLSGKNYGRAVYECLRGGLDFTKDDENVNSQPFMRWPQRFDFEQEAIEKAHGETGERKVHYLNVTAPTPGEMYKRAEYAKELGAPIIMHDYLTGGLCANTGLANWCRDNGMLLHIHRAMHAELDRNPHHGIHFRVLTKVLRLSGRDHLHSGTVVGKLEGDRASTLGWIDIMRDTFIKEDRSRGIFFDQDFGSMPGVMPVASGGIHVWHMPALVNIFGDDSVLQFGGGTVGHPWGNAPGATANRVELEACVKARNEGIAVEKEGKAVLTEAANDSPELKIAMETWKEIKFEFDTVDKLDIAHK.

Asn116 and Thr166 together coordinate substrate. The Proton acceptor role is filled by Lys168. Position 170 (Lys170) interacts with substrate. The Mg(2+) site is built by Lys194, Asp196, and Glu197. Lys194 bears the N6-carboxylysine mark. The active-site Proton acceptor is His287. Residues Arg288, His320, and Ser372 each contribute to the substrate site.

This sequence belongs to the RuBisCO large chain family. Type I subfamily. Heterohexadecamer of 8 large chains and 8 small chains. It depends on Mg(2+) as a cofactor.

The catalysed reaction is 2 (2R)-3-phosphoglycerate + 2 H(+) = D-ribulose 1,5-bisphosphate + CO2 + H2O. It catalyses the reaction D-ribulose 1,5-bisphosphate + O2 = 2-phosphoglycolate + (2R)-3-phosphoglycerate + 2 H(+). In terms of biological role, ruBisCO catalyzes two reactions: the carboxylation of D-ribulose 1,5-bisphosphate, the primary event in carbon dioxide fixation, as well as the oxidative fragmentation of the pentose substrate. Both reactions occur simultaneously and in competition at the same active site. The chain is Ribulose bisphosphate carboxylase large chain from Hydrogenophaga pseudoflava (Pseudomonas carboxydoflava).